Here is a 452-residue protein sequence, read N- to C-terminus: Mitochondrial distribution and morphology protein 10 (452 aa).

The protein belongs to the MDM10 family. As to quaternary structure, component of the ER-mitochondria encounter structure (ERMES) or MDM complex, composed of MMM1, MDM10, MDM12 and MDM34. Associates with the mitochondrial outer membrane sorting assembly machinery SAM(core) complex.

The protein localises to the mitochondrion outer membrane. Component of the ERMES/MDM complex, which serves as a molecular tether to connect the endoplasmic reticulum and mitochondria. Components of this complex are involved in the control of mitochondrial shape and protein biogenesis and may function in phospholipid exchange. MDM10 is involved in the late assembly steps of the general translocase of the mitochondrial outer membrane (TOM complex). Functions in the TOM40-specific route of the assembly of outer membrane beta-barrel proteins, including the association of TOM40 with the receptor TOM22 and small TOM proteins. Can associate with the SAM(core) complex as well as the MDM12-MMM1 complex, both involved in late steps of the major beta-barrel assembly pathway, that is responsible for biogenesis of all outer membrane beta-barrel proteins. May act as a switch that shuttles between both complexes and channels precursor proteins into the TOM40-specific pathway. Plays a role in mitochondrial morphology and in the inheritance of mitochondria. The protein is Mitochondrial distribution and morphology protein 10 of Kluyveromyces lactis (strain ATCC 8585 / CBS 2359 / DSM 70799 / NBRC 1267 / NRRL Y-1140 / WM37) (Yeast).